The sequence spans 184 residues: Ribosome-recycling factor (184 aa).

The protein belongs to the RRF family.

It is found in the cytoplasm. In terms of biological role, responsible for the release of ribosomes from messenger RNA at the termination of protein biosynthesis. May increase the efficiency of translation by recycling ribosomes from one round of translation to another. The sequence is that of Ribosome-recycling factor from Natranaerobius thermophilus (strain ATCC BAA-1301 / DSM 18059 / JW/NM-WN-LF).